A 172-amino-acid chain; its full sequence is Type IV secretion system putative outer membrane lipoprotein BRA0058/BS1330_II0058 (172 aa).

Positions 1-15 are cleaved as a signal peptide; sequence MRTLVMVACAVSLAA. C16 carries the N-palmitoyl cysteine lipid modification. C16 is lipidated: S-diacylglycerol cysteine. Residues 58-172 enclose the OmpA-like domain; the sequence is WPARPPKQTV…RRVDIEILRK (115 aa).

Its subcellular location is the cell outer membrane. In terms of biological role, the VirB system could be required for the establishment of the replication niche in the host. This chain is Type IV secretion system putative outer membrane lipoprotein BRA0058/BS1330_II0058, found in Brucella suis biovar 1 (strain 1330).